The primary structure comprises 255 residues: HLA class II histocompatibility antigen, DQ alpha 2 chain (255 aa).

Residues 1-23 (MILNKALLLGALALTAVMSPCGG) form the signal peptide. The tract at residues 24–110 (EDIVADHVAS…RQSNSTAATN (87 aa)) is alpha-1. Topologically, residues 24-217 (EDIVADHVAS…IPAPMSELTE (194 aa)) are extracellular. N-linked (GlcNAc...) asparagine glycosylation is found at Asn-104 and Asn-144. The alpha-2 stretch occupies residues 111-204 (EVPEVTVFSK…GLDEPLLKHW (94 aa)). Positions 113–205 (PEVTVFSKFP…LDEPLLKHWE (93 aa)) constitute an Ig-like C1-type domain. Residues Cys-133 and Cys-189 are joined by a disulfide bond. Positions 205 to 217 (EPEIPAPMSELTE) are connecting peptide. Residues 218–240 (TLVCALGLSVGLMGIVVGTVFII) traverse the membrane as a helical segment. At 241–255 (QGLRSVGASRHQGLL) the chain is on the cytoplasmic side.

This sequence belongs to the MHC class II family. Heterodimer of an alpha and a beta subunit; also referred as MHC class II molecule. Dimer formation with HLA-DQB2, but not with HLA-DQB1, is required for efficient exit from the endoplasmic reticulum (ER). In the ER, forms a heterononamer; 3 MHC class II molecules bind to a CD74 homotrimer (also known as invariant chain or HLA class II histocompatibility antigen gamma chain). In the endosomal/lysosomal system; CD74 undergoes sequential degradation by various proteases; leaving a small fragment termed CLIP on each MHC class II molecule. MHC class II molecule interacts with HLA_DM, and HLA_DO in B-cells, in order to release CLIP and facilitate the binding of antigenic peptides. Association with HLA-DMA also occurs in skin Langerhans cells, in post-Golgi compartments. As to expression, restricted to skin Langerhans cells, although some expression at low levels may occur at the surface of B lymphoblastoid cells.

The protein resides in the cell membrane. The protein localises to the endoplasmic reticulum membrane. Its subcellular location is the golgi apparatus. It localises to the trans-Golgi network membrane. It is found in the endosome membrane. The protein resides in the lysosome membrane. Functionally, binds peptides derived from antigens that access the endocytic route of antigen presenting cells (APC) and presents them on the cell surface for recognition by the CD4 T-cells. The peptide binding cleft accommodates peptides of 10-30 residues. The peptides presented by MHC class II molecules are generated mostly by degradation of proteins that access the endocytic route, where they are processed by lysosomal proteases and other hydrolases. Exogenous antigens that have been endocytosed by the APC are thus readily available for presentation via MHC II molecules, and for this reason this antigen presentation pathway is usually referred to as exogenous. As membrane proteins on their way to degradation in lysosomes as part of their normal turn-over are also contained in the endosomal/lysosomal compartments, exogenous antigens must compete with those derived from endogenous components. Autophagy is also a source of endogenous peptides, autophagosomes constitutively fuse with MHC class II loading compartments. In addition to APCs, other cells of the gastrointestinal tract, such as epithelial cells, express MHC class II molecules and CD74 and act as APCs, which is an unusual trait of the GI tract. To produce a MHC class II molecule that presents an antigen, three MHC class II molecules (heterodimers of an alpha and a beta chain) associate with a CD74 trimer in the ER to form a heterononamer. Soon after the entry of this complex into the endosomal/lysosomal system where antigen processing occurs, CD74 undergoes a sequential degradation by various proteases, including CTSS and CTSL, leaving a small fragment termed CLIP (class-II-associated invariant chain peptide). The removal of CLIP is facilitated by HLA-DM via direct binding to the alpha-beta-CLIP complex so that CLIP is released. HLA-DM stabilizes MHC class II molecules until primary high affinity antigenic peptides are bound. The MHC II molecule bound to a peptide is then transported to the cell membrane surface. In B-cells, the interaction between HLA-DM and MHC class II molecules is regulated by HLA-DO. Primary dendritic cells (DCs) also to express HLA-DO. Lysosomal microenvironment has been implicated in the regulation of antigen loading into MHC II molecules, increased acidification produces increased proteolysis and efficient peptide loading. This Homo sapiens (Human) protein is HLA class II histocompatibility antigen, DQ alpha 2 chain (HLA-DQA2).